Here is a 3503-residue protein sequence, read N- to C-terminus: Protein dachsous (3503 aa).

An N-terminal signal peptide occupies residues 1–20 (MLRSSLLILLAIVLLGSSQA). Residues 21–3045 (ASHDQERERK…SSSGSIGDWA (3025 aa)) lie on the Extracellular side of the membrane. Cadherin domains are found at residues 22–121 (SHDQ…APTF), 122–233 (PQTS…QPIF), 234–340 (NQSR…QPTI), 345–451 (LSDD…PPEF), 452–558 (EQDL…EPIF), 559–662 (DQSF…RPVF), 663–774 (YPRE…PPIF), 775–878 (EKAR…APEF), 879–983 (EASM…PPVF), 984–1100 (EKDE…DPKF), 1101–1203 (QKSK…APEI), 1205–1312 (DPQE…RPTF), 1313–1432 (TSSS…APEW), and 1433–1549 (PQDP…APHF). 2 N-linked (GlcNAc...) asparagine glycosylation sites follow: asparagine 220 and asparagine 234. The residue at position 236 (serine 236) is a Phosphoserine. N-linked (GlcNAc...) asparagine glycosylation is found at asparagine 245, asparagine 381, and asparagine 416. Asparagine 564, asparagine 594, and asparagine 743 each carry an N-linked (GlcNAc...) asparagine glycan. N-linked (GlcNAc...) asparagine glycans are attached at residues asparagine 966, asparagine 991, asparagine 1006, asparagine 1029, asparagine 1143, and asparagine 1236. 4 N-linked (GlcNAc...) asparagine glycosylation sites follow: asparagine 1453, asparagine 1479, asparagine 1524, and asparagine 1553. Cadherin domains lie at 1556 to 1666 (GGKT…PPRF), 1667 to 1794 (LQAV…SPEF), 1796 to 1899 (PGSC…APRF), 1900 to 2004 (KLSK…RPIF), 2005 to 2111 (ERYP…TPVL), 2114 to 2269 (QNET…SPKF), 2270 to 2375 (SQKQ…QPTF), 2375 to 2479 (FPPN…APVF), 2489 to 2595 (AILP…RSQF), 2596 to 2699 (LQNQ…FPIF), 2701 to 2809 (RSAK…EPKF), 2810 to 2916 (PLTE…TPQF), and 2919 to 3028 (RTYR…HPGT). N-linked (GlcNAc...) asparagine glycosylation is found at asparagine 1700, asparagine 1884, and asparagine 1940. The N-linked (GlcNAc...) asparagine glycan is linked to asparagine 2115. The tract at residues 2193 to 2225 (GRALHYEEEIDESSEEDPNNSTRSQRALTSSSF) is disordered. A compositionally biased stretch (acidic residues) spans 2200 to 2210 (EEIDESSEEDP). N-linked (GlcNAc...) asparagine glycans are attached at residues asparagine 2211 and asparagine 2212. A compositionally biased stretch (polar residues) spans 2211 to 2225 (NNSTRSQRALTSSSF). N-linked (GlcNAc...) asparagine glycans are attached at residues asparagine 2421, asparagine 2511, asparagine 2520, asparagine 2547, asparagine 2588, and asparagine 2678. Asparagine 2845 and asparagine 2967 each carry an N-linked (GlcNAc...) asparagine glycan. A helical membrane pass occupies residues 3046 to 3066 (IGLLVAFLLVLCAAAGIFLFI). Topologically, residues 3067–3503 (HMRSRKPRNA…SQRGNVGTRM (437 aa)) are cytoplasmic. 3 disordered regions span residues 3114–3195 (AGAA…GRIS), 3360–3404 (LSEH…IPPP), and 3431–3503 (LPRS…GTRM). 2 stretches are compositionally biased toward low complexity: residues 3133–3159 (GAHAGSSGAATTSELSGSEQSGSSGRG) and 3363–3372 (HSGSGASSSA). Pro residues predominate over residues 3391–3404 (KPPPSAPPTHIPPP). The segment covering 3440 to 3463 (ASGSFSTSSAMSPSFSPSLSPLAT) has biased composition (low complexity). Residues serine 3465 and serine 3469 each carry the phosphoserine modification. Positions 3492-3503 (QPSQRGNVGTRM) are enriched in polar residues.

As to quaternary structure, interacts (via cytoplasmic region) with Myo31DF. In terms of processing, phosphorylated by fj on Ser/Thr of cadherin domains. In terms of tissue distribution, expressed in embryonic ectoderm. In larvae, expression is restricted to imaginal disks and brain.

The protein localises to the cell membrane. It is found in the cell junction. Required for normal morphogenesis of adult structures derived from imaginal disks. Plays a role in planar cell polarity and in determining body left-right asymmetry. Expression in segment H1 of the imaginal ring and interaction with Myo31DF are required to induce changes of cell shape and orientation in segment H2, which then gives rise to normal, dextral looping of the adult hindgut. The polypeptide is Protein dachsous (ds) (Drosophila melanogaster (Fruit fly)).